The following is a 212-amino-acid chain: Probable chemoreceptor glutamine deamidase CheD (212 aa).

The protein belongs to the CheD family.

The enzyme catalyses L-glutaminyl-[protein] + H2O = L-glutamyl-[protein] + NH4(+). Its function is as follows. Probably deamidates glutamine residues to glutamate on methyl-accepting chemotaxis receptors (MCPs), playing an important role in chemotaxis. This Oleidesulfovibrio alaskensis (strain ATCC BAA-1058 / DSM 17464 / G20) (Desulfovibrio alaskensis) protein is Probable chemoreceptor glutamine deamidase CheD.